We begin with the raw amino-acid sequence, 657 residues long: Receptor-type tyrosine-protein phosphatase R (657 aa).

Positions 1-21 are cleaved as a signal peptide; the sequence is MRRAVCFPALCLLLNLHAAGC. Over 22–227 the chain is Extracellular; the sequence is FSGNNDHFLA…EADKIWSKEG (206 aa). An O-linked (Xyl...) (chondroitin sulfate) serine glycan is attached at Ser-23. The N-linked (GlcNAc...) asparagine glycan is linked to Asn-129. Residues 228–248 traverse the membrane as a helical segment; the sequence is FYAVVIFLSIFVIIVTCLMIL. Residues 249–657 are Cytoplasmic-facing; it reads YRLKERFQLS…ESRLSAETVQ (409 aa). Residue Ser-272 is modified to Phosphoserine. Phosphoserine; by PKA is present on Ser-339. A Tyrosine-protein phosphatase domain is found at 393–647; that stretch reads LQSEFMEIPM…EFVHHALCLY (255 aa). Residues Asp-554, 588-594, and Gln-632 each bind substrate; that span reads CSAGIGR. Cys-588 serves as the catalytic Phosphocysteine intermediate.

Belongs to the protein-tyrosine phosphatase family. Receptor class 7 subfamily. Interacts with MAPKs. Detected in cerebrospinal fluid (at protein level). Expressed in brain, placenta, small intestine, stomach, uterus and weakly in the prostate. Isoform alpha has been observed only in the brain. Isoform gamma is expressed in brain, placenta and uterus. Isoform delta is expressed in brain, kidney, placenta, prostate, small intestine and uterus.

It is found in the secreted. Its subcellular location is the cell membrane. It localises to the cytoplasm. The protein resides in the perinuclear region. It carries out the reaction O-phospho-L-tyrosyl-[protein] + H2O = L-tyrosyl-[protein] + phosphate. Its function is as follows. Sequesters mitogen-activated protein kinases (MAPKs) such as MAPK1, MAPK3 and MAPK14 in the cytoplasm in an inactive form. The MAPKs bind to a dephosphorylated kinase interacting motif, phosphorylation of which by the protein kinase A complex releases the MAPKs for activation and translocation into the nucleus. The polypeptide is Receptor-type tyrosine-protein phosphatase R (PTPRR) (Homo sapiens (Human)).